Here is a 257-residue protein sequence, read N- to C-terminus: S-methyl-5'-thioadenosine phosphorylase (257 aa).

Phosphate contacts are provided by residues Ser10 and 50–51 (RH). Met180 is a substrate binding site. Residue Thr181 coordinates phosphate. 204-206 (DYD) is a substrate binding site.

The protein belongs to the PNP/MTAP phosphorylase family. MTAP subfamily. Homohexamer. Dimer of a homotrimer.

The catalysed reaction is S-methyl-5'-thioadenosine + phosphate = 5-(methylsulfanyl)-alpha-D-ribose 1-phosphate + adenine. The protein operates within amino-acid biosynthesis; L-methionine biosynthesis via salvage pathway; S-methyl-5-thio-alpha-D-ribose 1-phosphate from S-methyl-5'-thioadenosine (phosphorylase route): step 1/1. Its function is as follows. Catalyzes the reversible phosphorylation of S-methyl-5'-thioadenosine (MTA) to adenine and 5-methylthioribose-1-phosphate. Involved in the breakdown of MTA, a major by-product of polyamine biosynthesis. Responsible for the first step in the methionine salvage pathway after MTA has been generated from S-adenosylmethionine. Has broad substrate specificity with 6-aminopurine nucleosides as preferred substrates. This is S-methyl-5'-thioadenosine phosphorylase (mntP) from Pyrococcus abyssi (strain GE5 / Orsay).